Consider the following 201-residue polypeptide: Dephospho-CoA kinase (201 aa).

Positions 4–201 (AFFVTASIAC…VIQEISKGNM (198 aa)) constitute a DPCK domain. 12–17 (ACGKST) lines the ATP pocket.

This sequence belongs to the CoaE family.

It is found in the cytoplasm. The catalysed reaction is 3'-dephospho-CoA + ATP = ADP + CoA + H(+). The protein operates within cofactor biosynthesis; coenzyme A biosynthesis; CoA from (R)-pantothenate: step 5/5. Catalyzes the phosphorylation of the 3'-hydroxyl group of dephosphocoenzyme A to form coenzyme A. The sequence is that of Dephospho-CoA kinase from Campylobacter jejuni subsp. jejuni serotype O:2 (strain ATCC 700819 / NCTC 11168).